A 364-amino-acid chain; its full sequence is Heme A synthase (364 aa).

Transmembrane regions (helical) follow at residues 25–45 (ALRL…LVGG), 111–131 (FLAR…WATG), 139–159 (WPLV…WWMV), 174–194 (LATH…VMRG), 212–232 (AIAL…VAGL), 270–290 (VQFV…YHMV), 305–325 (SVVL…ALLL), and 327–347 (VPLD…GFTV). Histidine 274 is a heme binding site. Histidine 335 lines the heme pocket.

Belongs to the COX15/CtaA family. Type 2 subfamily. In terms of assembly, interacts with CtaB. Heme b is required as a cofactor.

The protein localises to the cell membrane. The enzyme catalyses Fe(II)-heme o + 2 A + H2O = Fe(II)-heme a + 2 AH2. Its pathway is porphyrin-containing compound metabolism; heme A biosynthesis; heme A from heme O: step 1/1. Functionally, catalyzes the conversion of heme O to heme A by two successive hydroxylations of the methyl group at C8. The first hydroxylation forms heme I, the second hydroxylation results in an unstable dihydroxymethyl group, which spontaneously dehydrates, resulting in the formyl group of heme A. This is Heme A synthase from Allorhizobium ampelinum (strain ATCC BAA-846 / DSM 112012 / S4) (Agrobacterium vitis (strain S4)).